Here is a 361-residue protein sequence, read N- to C-terminus: tRNA 2-selenouridine synthase (361 aa).

Residues 11 to 134 form the Rhodanese domain; the sequence is LLADTPLIDV…LRQTAIQATW (124 aa). The active-site S-selanylcysteine intermediate is cysteine 94.

This sequence belongs to the SelU family. Monomer.

It carries out the reaction 5-methylaminomethyl-2-thiouridine(34) in tRNA + selenophosphate + (2E)-geranyl diphosphate + H2O + H(+) = 5-methylaminomethyl-2-selenouridine(34) in tRNA + (2E)-thiogeraniol + phosphate + diphosphate. It catalyses the reaction 5-methylaminomethyl-2-thiouridine(34) in tRNA + (2E)-geranyl diphosphate = 5-methylaminomethyl-S-(2E)-geranyl-thiouridine(34) in tRNA + diphosphate. The enzyme catalyses 5-methylaminomethyl-S-(2E)-geranyl-thiouridine(34) in tRNA + selenophosphate + H(+) = 5-methylaminomethyl-2-(Se-phospho)selenouridine(34) in tRNA + (2E)-thiogeraniol. The catalysed reaction is 5-methylaminomethyl-2-(Se-phospho)selenouridine(34) in tRNA + H2O = 5-methylaminomethyl-2-selenouridine(34) in tRNA + phosphate. Its function is as follows. Involved in the post-transcriptional modification of the uridine at the wobble position (U34) of tRNA(Lys), tRNA(Glu) and tRNA(Gln). Catalyzes the conversion of 2-thiouridine (S2U-RNA) to 2-selenouridine (Se2U-RNA). Acts in a two-step process involving geranylation of 2-thiouridine (S2U) to S-geranyl-2-thiouridine (geS2U) and subsequent selenation of the latter derivative to 2-selenouridine (Se2U) in the tRNA chain. The polypeptide is tRNA 2-selenouridine synthase (Salmonella schwarzengrund (strain CVM19633)).